Here is a 98-residue protein sequence, read N- to C-terminus: uncharacterized protein (98 aa).

Residues 58–98 (ARFPVEDTAGGLLRTGGHRPQISDEEVSKRHHEQSHGQEDH) form a disordered region.

This is an uncharacterized protein from Saccharomyces cerevisiae (strain ATCC 204508 / S288c) (Baker's yeast).